Reading from the N-terminus, the 368-residue chain is Probable dual-specificity RNA methyltransferase RlmN (368 aa).

The Proton acceptor role is filled by Glu100. Positions Gln106 to Asp344 constitute a Radical SAM core domain. Residues Cys113 and Cys349 are joined by a disulfide bond. The [4Fe-4S] cluster site is built by Cys120, Cys124, and Cys127. Residues Gly172 to Glu173, Ser204, Ser227 to His229, and Asn305 each bind S-adenosyl-L-methionine. The active-site S-methylcysteine intermediate is Cys349.

Belongs to the radical SAM superfamily. RlmN family. [4Fe-4S] cluster serves as cofactor.

The protein localises to the cytoplasm. The catalysed reaction is adenosine(2503) in 23S rRNA + 2 reduced [2Fe-2S]-[ferredoxin] + 2 S-adenosyl-L-methionine = 2-methyladenosine(2503) in 23S rRNA + 5'-deoxyadenosine + L-methionine + 2 oxidized [2Fe-2S]-[ferredoxin] + S-adenosyl-L-homocysteine. It carries out the reaction adenosine(37) in tRNA + 2 reduced [2Fe-2S]-[ferredoxin] + 2 S-adenosyl-L-methionine = 2-methyladenosine(37) in tRNA + 5'-deoxyadenosine + L-methionine + 2 oxidized [2Fe-2S]-[ferredoxin] + S-adenosyl-L-homocysteine. Functionally, specifically methylates position 2 of adenine 2503 in 23S rRNA and position 2 of adenine 37 in tRNAs. The chain is Probable dual-specificity RNA methyltransferase RlmN from Streptococcus agalactiae serotype Ia (strain ATCC 27591 / A909 / CDC SS700).